Consider the following 539-residue polypeptide: Chaperonin GroEL (539 aa).

Residues 29–32 (TLGP), 86–90 (DGTTT), glycine 413, 477–479 (DAL), and aspartate 493 each bind ATP.

Belongs to the chaperonin (HSP60) family. As to quaternary structure, forms a cylinder of 14 subunits composed of two heptameric rings stacked back-to-back. Interacts with the co-chaperonin GroES.

The protein localises to the cytoplasm. It carries out the reaction ATP + H2O + a folded polypeptide = ADP + phosphate + an unfolded polypeptide.. In terms of biological role, together with its co-chaperonin GroES, plays an essential role in assisting protein folding. The GroEL-GroES system forms a nano-cage that allows encapsulation of the non-native substrate proteins and provides a physical environment optimized to promote and accelerate protein folding. The polypeptide is Chaperonin GroEL (Clostridium perfringens (strain 13 / Type A)).